The primary structure comprises 394 residues: Enoyl-CoA delta isomerase 2 (394 aa).

The N-terminal 38 residues, M1 to A38, are a transit peptide targeting the mitochondrion. The region spanning S39–S124 is the ACB domain. Position 51 is an N6-acetyllysine; alternate (K51). K51 is subject to N6-succinyllysine; alternate. K55 carries the post-translational modification N6-succinyllysine. Residue K62 is modified to N6-acetyllysine; alternate. The residue at position 62 (K62) is an N6-succinyllysine; alternate. Y66–K70 provides a ligand contact to an acyl-CoA. K70, K81, and K90 each carry N6-succinyllysine. At K92 the chain carries N6-acetyllysine; alternate. K92 is subject to N6-succinyllysine; alternate. K92 contributes to the an acyl-CoA binding site. S101 bears the Phosphoserine mark. An an acyl-CoA-binding site is contributed by Y111. S119 bears the Phosphoserine mark. Residues T151–P322 form an ECH-like region. K161 bears the N6-succinyllysine mark. S198–L202 contacts substrate. N6-succinyllysine is present on K289. A Microbody targeting signal motif is present at residues S392 to L394.

It in the C-terminal section; belongs to the enoyl-CoA hydratase/isomerase family. As to expression, abundant in heart, skeletal muscle and liver. Expressed in CD34(+) T-cells and CD34(+) bone marrow cells.

The protein resides in the mitochondrion. Its subcellular location is the peroxisome matrix. The enzyme catalyses a (3Z)-enoyl-CoA = a 4-saturated (2E)-enoyl-CoA. It carries out the reaction (3Z)-octenoyl-CoA = (2E)-octenoyl-CoA. It catalyses the reaction a (3E)-enoyl-CoA = a 4-saturated (2E)-enoyl-CoA. The catalysed reaction is (2E)-tetradecenoyl-CoA = (3Z)-tetradecenoyl-CoA. The enzyme catalyses (3E)-tetradecenoyl-CoA = (2E)-tetradecenoyl-CoA. It carries out the reaction (3E)-octenoyl-CoA = (2E)-octenoyl-CoA. It catalyses the reaction (3E)-nonenoyl-CoA = (2E)-nonenoyl-CoA. It functions in the pathway lipid metabolism; fatty acid beta-oxidation. Functionally, able to isomerize both 3-cis and 3-trans double bonds into the 2-trans form in a range of enoyl-CoA species. Has a preference for 3-trans substrates. In Homo sapiens (Human), this protein is Enoyl-CoA delta isomerase 2 (ECI2).